The sequence spans 320 residues: Mitochondrial glutamate carrier 2 (320 aa).

Solcar repeat units lie at residues 11–97, 105–215, and 224–313; these read LSIS…LRQL, RNLK…LNQL, and ASFT…GIGE. 3 helical membrane-spanning segments follow: residues 17–37, 66–86, and 110–128; these read LING…IDLA, FLGM…EKAI, and EMLA…TCPM. Serine 150 carries the phosphoserine modification. 3 helical membrane passes run 190-210, 230-250, and 293-313; these read GLGA…PLFA, FVAG…LDVL, and ALVI…GIGE.

The protein belongs to the mitochondrial carrier (TC 2.A.29) family.

The protein resides in the mitochondrion inner membrane. It carries out the reaction L-glutamate(in) + H(+)(in) = L-glutamate(out) + H(+)(out). Its function is as follows. Responsible for the transport of glutamate from the cytosol into the mitochondrial matrix with the concomitant import of a proton (symport system). This is Mitochondrial glutamate carrier 2 (Slc25a18) from Mus musculus (Mouse).